Consider the following 235-residue polypeptide: Class B acid phosphatase (235 aa).

The N-terminal stretch at 1–22 (MKNLVKLSLIAMLTAATLPAMA) is a signal peptide. Asp-67 acts as the Nucleophile in catalysis. Mg(2+)-binding residues include Asp-67 and Asp-69. Asp-69 serves as the catalytic Proton donor. Substrate is bound by residues 135–136 (TG) and Lys-175. Asp-190 serves as a coordination point for Mg(2+).

Belongs to the class B bacterial acid phosphatase family. In terms of assembly, homotetramer. Mg(2+) is required as a cofactor.

It is found in the periplasm. The catalysed reaction is a phosphate monoester + H2O = an alcohol + phosphate. Its function is as follows. Dephosphorylates several organic phosphate monoesters. Also has a phosphotransferase activity catalyzing the transfer of low-energy phosphate groups from organic phosphate monoesters to free hydroxyl groups of various organic compounds. The sequence is that of Class B acid phosphatase from Aggregatibacter actinomycetemcomitans serotype C (strain D11S-1) (Actinobacillus actinomycetemcomitans).